Reading from the N-terminus, the 430-residue chain is MALDVQSDIVAYDAPKKDLYEIGEMPPLGHVPKEMYAWAIRRERHGEPDQAMQIEVVETPSIDSHEVLVLVMAAGVNYNGIWAGLGVPVSPFDGHKQPYHIAGSDASGIVWAVGDKVKRWKVGDEVVIHCNQDDGDDEECNGGDPMFSPTQRIWGYETPDGSFAQFTRVQAQQLMKRPKHLTWEEAACYTLTLATAYRMLFGHKPHDLKPGQNVLVWGASGGLGSYAIQLINTAGANAIGVISEEDKRDFVMGLGAKGVINRKDFKCWGQLPKVNSPEYNEWLKEARKFGKAIWDITGKGINVDMVFEHPGEATFPVSSLVVKKGGMVVICAGTTGFNCTFDVRYMWMHQKRLQGSHFANLKQASAANQLMIERRLDPCMSEVFPWAEIPAAHTKMYRNQHKPGNMAVLVQAPRTGLRTFADVLEAGRKA.

This sequence belongs to the zinc-containing alcohol dehydrogenase family. Crotonyl-CoA carboxylase/reductase subfamily. Homodimer. Requires Despite some sequence similarity to zinc-containing alcohol dehydrogenases, this enzyme does not bind any metals. as cofactor.

The catalysed reaction is (2S)-ethylmalonyl-CoA + NADP(+) = (2E)-butenoyl-CoA + CO2 + NADPH. It catalyses the reaction (S)-methylmalonyl-CoA + NADP(+) = acryloyl-CoA + CO2 + NADPH. The enzyme catalyses butanoyl-CoA + NADP(+) = (2E)-butenoyl-CoA + NADPH + H(+). In terms of biological role, catalyzes the NADPH-dependent reductive carboxylation of crotonyl-CoA ((2E)-butenoyl-CoA) to (2S)-ethylmalonyl-CoA, in the presence of CO2. This is a key reaction in the ethylmalonyl-CoA pathway for acetyl-CoA assimilation required for R.sphaeroides growth on acetate as sole carbon source. Is also able to accept acryloyl-CoA as an alternative substrate, yielding (2S)-methylmalonyl-CoA. To a lesser extent, when CO2 is absent, the enzyme also catalyzes the reduction of crotonyl-CoA to butanoyl-CoA. In Cereibacter sphaeroides (strain ATCC 17023 / DSM 158 / JCM 6121 / CCUG 31486 / LMG 2827 / NBRC 12203 / NCIMB 8253 / ATH 2.4.1.) (Rhodobacter sphaeroides), this protein is Crotonyl-CoA carboxylase/reductase.